Consider the following 416-residue polypeptide: MFSKSVTLAQYDPDLAAAIAQEDQRQQDHVELIASENYVSCAVMDAQGSQLTNKYAEGYPGKRYYGGCEYVDIVEQLAIDRVKKLFGAQYANVQPHSGSQANQAVYASVLKPGDTILGMSLAHGGHLTHGASVNISGKLYNAVTYGLDENEVLDYAEVERLALEHKPKMIVAGASAYALQIDWAKFREIADKVGAYLFVDMAHYAGLVAGGEYPNPVPFCDFVTTTTHKTLRGPRGGVILCRDNTHEKALNSSIFPSLQGGPLMHVIAAKAVAFKEALQPEFKQYAKQVKINAAAMAEELVKRGLRIVSGRTESHVFLVDLQPMKITGKAAEAALGKAHITVNKNAIPNDPEKPFVTSGIRIGSAAMTTRGFNEADVRVLANLVADVLSNPEDEANLAKVREQVTALCNKYPVYGA.

Residues L121 and 125–127 contribute to the (6S)-5,6,7,8-tetrahydrofolate site; that span reads GHL. K229 is subject to N6-(pyridoxal phosphate)lysine.

This sequence belongs to the SHMT family. Homodimer. It depends on pyridoxal 5'-phosphate as a cofactor.

The protein resides in the cytoplasm. The enzyme catalyses (6R)-5,10-methylene-5,6,7,8-tetrahydrofolate + glycine + H2O = (6S)-5,6,7,8-tetrahydrofolate + L-serine. It participates in one-carbon metabolism; tetrahydrofolate interconversion. Its pathway is amino-acid biosynthesis; glycine biosynthesis; glycine from L-serine: step 1/1. Functionally, catalyzes the reversible interconversion of serine and glycine with tetrahydrofolate (THF) serving as the one-carbon carrier. This reaction serves as the major source of one-carbon groups required for the biosynthesis of purines, thymidylate, methionine, and other important biomolecules. Also exhibits THF-independent aldolase activity toward beta-hydroxyamino acids, producing glycine and aldehydes, via a retro-aldol mechanism. The sequence is that of Serine hydroxymethyltransferase from Neisseria meningitidis serogroup C (strain 053442).